Reading from the N-terminus, the 97-residue chain is Small ribosomal subunit protein bS6 (97 aa).

The protein belongs to the bacterial ribosomal protein bS6 family.

Functionally, binds together with bS18 to 16S ribosomal RNA. In Listeria monocytogenes serotype 4b (strain CLIP80459), this protein is Small ribosomal subunit protein bS6.